The primary structure comprises 570 residues: Chaperonin GroEL 1 (570 aa).

ATP is bound by residues T42–P45, K63, D99–T103, G427, and D507. A disordered region spans residues E537–M570. Over residues G545–M570 the composition is skewed to gly residues.

The protein belongs to the chaperonin (HSP60) family. Forms a cylinder of 14 subunits composed of two heptameric rings stacked back-to-back. Interacts with the co-chaperonin GroES.

The protein resides in the cytoplasm. It catalyses the reaction ATP + H2O + a folded polypeptide = ADP + phosphate + an unfolded polypeptide.. Functionally, together with its co-chaperonin GroES, plays an essential role in assisting protein folding. The GroEL-GroES system forms a nano-cage that allows encapsulation of the non-native substrate proteins and provides a physical environment optimized to promote and accelerate protein folding. In Salinibacter ruber (strain DSM 13855 / M31), this protein is Chaperonin GroEL 1.